The sequence spans 190 residues: Elongation factor P (190 aa).

It belongs to the elongation factor P family.

Its subcellular location is the cytoplasm. It participates in protein biosynthesis; polypeptide chain elongation. Involved in peptide bond synthesis. Stimulates efficient translation and peptide-bond synthesis on native or reconstituted 70S ribosomes in vitro. Probably functions indirectly by altering the affinity of the ribosome for aminoacyl-tRNA, thus increasing their reactivity as acceptors for peptidyl transferase. The sequence is that of Elongation factor P (efp) from Mycoplasma pneumoniae (strain ATCC 29342 / M129 / Subtype 1) (Mycoplasmoides pneumoniae).